We begin with the raw amino-acid sequence, 256 residues long: MLRIADKTFDSHLFTGTGKFASSQLMVEAIRASGSQLVTLAMKRVDLRQHNDAILEPLIAAGVTLLPNTSGAKTAEEAIFAAHLAREALGTNWLKLEIHPDARWLLPDPIETLKAAETLVQQGFVVLPYCGADPVLCKRLEEVGCAAVMPLGAPIGSNQGLETRAMLEIIIQQATVPVVVDAGIGVPSHAAQALEMGADAVLVNTAIAVADDPVNMAKAFRLAVEAGLLARQSGPGSRSHFAHATSPLTGFLEASA.

K95 serves as the catalytic Schiff-base intermediate with DXP. 1-deoxy-D-xylulose 5-phosphate contacts are provided by residues G156, 182 to 183 (AG), and 204 to 205 (NT).

Belongs to the ThiG family. Homotetramer. Forms heterodimers with either ThiH or ThiS.

It is found in the cytoplasm. It catalyses the reaction [ThiS sulfur-carrier protein]-C-terminal-Gly-aminoethanethioate + 2-iminoacetate + 1-deoxy-D-xylulose 5-phosphate = [ThiS sulfur-carrier protein]-C-terminal Gly-Gly + 2-[(2R,5Z)-2-carboxy-4-methylthiazol-5(2H)-ylidene]ethyl phosphate + 2 H2O + H(+). Its pathway is cofactor biosynthesis; thiamine diphosphate biosynthesis. Its function is as follows. Catalyzes the rearrangement of 1-deoxy-D-xylulose 5-phosphate (DXP) to produce the thiazole phosphate moiety of thiamine. Sulfur is provided by the thiocarboxylate moiety of the carrier protein ThiS. In vitro, sulfur can be provided by H(2)S. The polypeptide is Thiazole synthase (Escherichia coli (strain 55989 / EAEC)).